A 158-amino-acid polypeptide reads, in one-letter code: uncharacterized protein (158 aa).

The span at 1-18 shows a compositional bias: polar residues; sequence MDLASEITSATQTSSLCS. Disordered regions lie at residues 1–20, 66–94, and 111–158; these read MDLA…CSSG, LRDL…KPCL, and GSSG…GEEF. Residues 72–90 show a composition bias toward low complexity; sequence RGSTSSSRSPSRPVSTSAS. 2 stretches are compositionally biased toward polar residues: residues 111 to 120 and 149 to 158; these read GSSGHLQSPG and LSHSAQGEEF.

This is an uncharacterized protein from Homo sapiens (Human).